A 274-amino-acid polypeptide reads, in one-letter code: NH(3)-dependent NAD(+) synthetase (274 aa).

Gly46–Ser53 is a binding site for ATP. Residue Asp52 participates in Mg(2+) binding. Arg140 provides a ligand contact to deamido-NAD(+). Position 160 (Thr160) interacts with ATP. Glu165 is a Mg(2+) binding site. Deamido-NAD(+) contacts are provided by Lys173 and Asp180. Positions 189 and 211 each coordinate ATP. His260–Lys261 serves as a coordination point for deamido-NAD(+).

This sequence belongs to the NAD synthetase family. Homodimer.

The catalysed reaction is deamido-NAD(+) + NH4(+) + ATP = AMP + diphosphate + NAD(+) + H(+). Its pathway is cofactor biosynthesis; NAD(+) biosynthesis; NAD(+) from deamido-NAD(+) (ammonia route): step 1/1. Functionally, catalyzes the ATP-dependent amidation of deamido-NAD to form NAD. Uses ammonia as a nitrogen source. The polypeptide is NH(3)-dependent NAD(+) synthetase (Lactococcus lactis subsp. cremoris (strain MG1363)).